Consider the following 175-residue polypeptide: MKILVLAVHPHMETSVVNKAWAEELSKHDNITVRDLYKEYPDEAIDVAKEQQLCEEYDRIVFQFPLYWYSSPPLLKKWQDLVLTYGWAFGSEGNALHGKELMLAVSTGSEAEKYQAGGANHYSISELLKPFQATSNLIGMKYLPPYVFYGVNYAAAEDISHSAKRLAEYIQQPFV.

Belongs to the NAD(P)H dehydrogenase (quinone) family.

The sequence is that of General stress protein 14 (ywrO) from Bacillus subtilis (strain 168).